The chain runs to 351 residues: N-acetyl-gamma-glutamyl-phosphate reductase (351 aa).

Cys-154 is an active-site residue.

The protein belongs to the NAGSA dehydrogenase family. Type 1 subfamily.

The protein resides in the cytoplasm. The catalysed reaction is N-acetyl-L-glutamate 5-semialdehyde + phosphate + NADP(+) = N-acetyl-L-glutamyl 5-phosphate + NADPH + H(+). It functions in the pathway amino-acid biosynthesis; L-arginine biosynthesis; N(2)-acetyl-L-ornithine from L-glutamate: step 3/4. Catalyzes the NADPH-dependent reduction of N-acetyl-5-glutamyl phosphate to yield N-acetyl-L-glutamate 5-semialdehyde. In Prochlorococcus marinus (strain MIT 9215), this protein is N-acetyl-gamma-glutamyl-phosphate reductase.